Here is a 249-residue protein sequence, read N- to C-terminus: MYKIVLLRHGESTWNKDNRFTGWTDVDLTEKGVEEARGAGHLLKREGYTFDLAYTSVLKRANKTLNIVLEELDSLWLPVEHSWRLNERHYGDLQGLNKAETAAKFGDDQVLVWRRSYDTPPPPLPEGDERLTSGDPRYASLPRAQFPRTECLKDTVARFVPYWETVIVPNILAGRRILIAAHGNSLRALIKYLDNISDSEIVGLNIPTAQPLVYELDANLRPIRSYYLADADTIRAAEAAVAGQGKAKG.

Residues 8-15 (RHGESTWN), 21-22 (TG), R60, 87-90 (ERHY), K98, 114-115 (RR), and 183-184 (GN) contribute to the substrate site. H9 functions as the Tele-phosphohistidine intermediate in the catalytic mechanism. Residue E87 is the Proton donor/acceptor of the active site.

The protein belongs to the phosphoglycerate mutase family. BPG-dependent PGAM subfamily. Homodimer.

The catalysed reaction is (2R)-2-phosphoglycerate = (2R)-3-phosphoglycerate. It functions in the pathway carbohydrate degradation; glycolysis; pyruvate from D-glyceraldehyde 3-phosphate: step 3/5. Its function is as follows. Catalyzes the interconversion of 2-phosphoglycerate and 3-phosphoglycerate. This chain is 2,3-bisphosphoglycerate-dependent phosphoglycerate mutase, found in Aromatoleum aromaticum (strain DSM 19018 / LMG 30748 / EbN1) (Azoarcus sp. (strain EbN1)).